Consider the following 210-residue polypeptide: HTH-type transcriptional repressor FabR (210 aa).

The HTH tetR-type domain occupies Lys-10 to Leu-70. Residues Ser-33–Phe-52 constitute a DNA-binding region (H-T-H motif).

As to quaternary structure, homodimer.

Its subcellular location is the cytoplasm. Functionally, represses the transcription of fabB, involved in unsaturated fatty acid (UFA) biosynthesis. By controlling UFA production, FabR directly influences the physical properties of the membrane bilayer. In Salmonella choleraesuis (strain SC-B67), this protein is HTH-type transcriptional repressor FabR.